The primary structure comprises 101 residues: Protein SPIRAL1-like 3 (101 aa).

Over residues 1–22 (MGRGVSSGGGQSSLGYLFGGGE) the composition is skewed to gly residues. Disordered regions lie at residues 1-54 (MGRG…GIQS) and 73-101 (TDRP…KDGK).

It belongs to the SPIRAL1 family.

Functionally, acts in maintaining the cortical microtubules organization essential for anisotropic cell growth. This Oryza sativa subsp. japonica (Rice) protein is Protein SPIRAL1-like 3.